The sequence spans 253 residues: tRNA pseudouridine synthase A (253 aa).

The active-site Nucleophile is aspartate 53. Residue tyrosine 111 coordinates substrate.

Belongs to the tRNA pseudouridine synthase TruA family. Homodimer.

It carries out the reaction uridine(38/39/40) in tRNA = pseudouridine(38/39/40) in tRNA. Its function is as follows. Formation of pseudouridine at positions 38, 39 and 40 in the anticodon stem and loop of transfer RNAs. The sequence is that of tRNA pseudouridine synthase A from Oceanobacillus iheyensis (strain DSM 14371 / CIP 107618 / JCM 11309 / KCTC 3954 / HTE831).